Here is a 518-residue protein sequence, read N- to C-terminus: Probable protein phosphatase 2C 14 (518 aa).

Low complexity-rich tracts occupy residues 1–10 and 86–105; these read MVEAAAGRRS and PQRQ…APGA. Disordered stretches follow at residues 1–31 and 86–108; these read MVEA…QQHQ and PQRQ…ADGR. The region spanning 129–437 is the PPM-type phosphatase domain; sequence VASLYTLQGK…DDCAVVCLFL (309 aa). Positions 165 and 166 each coordinate Mn(2+). The interval 192–222 is disordered; it reads TDEGRQTSTSSIKSNGDETGSPGNMGRDAEQ. The span at 197 to 213 shows a compositional bias: polar residues; it reads QTSTSSIKSNGDETGSP. Mn(2+) is bound by residues aspartate 382 and aspartate 428.

The protein belongs to the PP2C family. Mg(2+) serves as cofactor. Mn(2+) is required as a cofactor.

It catalyses the reaction O-phospho-L-seryl-[protein] + H2O = L-seryl-[protein] + phosphate. The enzyme catalyses O-phospho-L-threonyl-[protein] + H2O = L-threonyl-[protein] + phosphate. This chain is Probable protein phosphatase 2C 14, found in Oryza sativa subsp. japonica (Rice).